The primary structure comprises 247 residues: MWRTKTLESMLCSPMKCSSSNIGGSYAQSSKEVSNTTKREVHLPPCSSIMHAPLTPEINQAALPPPAYHYAPSSLHQTEDPVWRSSPNSIIFSPVIATPQPFPLTFVERQSCCPIYSTAASSYTAQSVPPSMQHFQEENHRAVSNEQYSLPNVHIGQNPGTLLSQTQTDLDLIQKQLRAVVKLRKQCPICGKVCSRPSTLRTHYLIHTGDTPFKCTWEHCNKSFNVKSNMLRHLRTHQKKIAKKKHQ.

C2H2-type zinc fingers lie at residues 185–207 (KQCPICGKVCSRPSTLRTHYLIH) and 213–237 (FKCTWEHCNKSFNVKSNMLRHLRTH).

The sequence is that of Zinc finger protein YPR015C from Saccharomyces cerevisiae (strain ATCC 204508 / S288c) (Baker's yeast).